The chain runs to 324 residues: Ribose 1,5-bisphosphate isomerase (324 aa).

Substrate contacts are provided by residues 22–25 (RGAG) and Arg-65. Catalysis depends on Cys-135, which acts as the Proton acceptor. Residue 137 to 139 (SKA) participates in substrate binding. The Proton donor role is filled by Asp-204. Substrate is bound by residues 214-215 (NK) and Lys-240.

The protein belongs to the eIF-2B alpha/beta/delta subunits family. R15P isomerase subfamily.

It catalyses the reaction alpha-D-ribose 1,5-bisphosphate = D-ribulose 1,5-bisphosphate. In terms of biological role, catalyzes the isomerization of ribose 1,5-bisphosphate (R15P) to ribulose 1,5-bisphosphate (RuBP), the CO(2) acceptor and substrate for RubisCO. Functions in an archaeal AMP degradation pathway, together with AMP phosphorylase and RubisCO. This chain is Ribose 1,5-bisphosphate isomerase, found in Pyrococcus horikoshii (strain ATCC 700860 / DSM 12428 / JCM 9974 / NBRC 100139 / OT-3).